The following is a 452-amino-acid chain: Na(+)/H(+) antiporter NhaA (452 aa).

The next 11 helical transmembrane spans lie at Phe-27–Ile-47, Leu-78–Ile-98, Ile-114–Phe-134, Ile-141–Leu-161, Ile-172–Phe-192, Gly-201–Ala-221, Ser-222–Ile-242, Pro-316–Ala-336, Phe-346–Ala-366, Ile-388–Leu-408, and Ile-421–Tyr-441.

Belongs to the NhaA Na(+)/H(+) (TC 2.A.33) antiporter family.

It is found in the cell inner membrane. It carries out the reaction Na(+)(in) + 2 H(+)(out) = Na(+)(out) + 2 H(+)(in). Its function is as follows. Na(+)/H(+) antiporter that extrudes sodium in exchange for external protons. The chain is Na(+)/H(+) antiporter NhaA from Bartonella bacilliformis (strain ATCC 35685 / KC583 / Herrer 020/F12,63).